We begin with the raw amino-acid sequence, 111 residues long: Ribosome-binding factor A (111 aa).

This sequence belongs to the RbfA family. In terms of assembly, monomer. Binds 30S ribosomal subunits, but not 50S ribosomal subunits or 70S ribosomes.

The protein localises to the cytoplasm. One of several proteins that assist in the late maturation steps of the functional core of the 30S ribosomal subunit. Associates with free 30S ribosomal subunits (but not with 30S subunits that are part of 70S ribosomes or polysomes). Required for efficient processing of 16S rRNA. May interact with the 5'-terminal helix region of 16S rRNA. This is Ribosome-binding factor A from Helicobacter pylori (strain HPAG1).